We begin with the raw amino-acid sequence, 393 residues long: S-adenosylmethionine synthase (393 aa).

E9 is a binding site for Mg(2+). H15 is an ATP binding site. A K(+)-binding site is contributed by E43. L-methionine is bound by residues E56 and Q99. ATP-binding positions include 167-169 (DGK), 235-238 (SGRF), D246, 252-253 (RK), A269, K273, and K277. D246 serves as a coordination point for L-methionine. K277 lines the L-methionine pocket.

The protein belongs to the AdoMet synthase family. Homotetramer. The cofactor is Mn(2+). Mg(2+) serves as cofactor. Requires Co(2+) as cofactor. It depends on K(+) as a cofactor.

Its subcellular location is the cytoplasm. It carries out the reaction L-methionine + ATP + H2O = S-adenosyl-L-methionine + phosphate + diphosphate. Its pathway is amino-acid biosynthesis; S-adenosyl-L-methionine biosynthesis; S-adenosyl-L-methionine from L-methionine: step 1/1. In terms of biological role, catalyzes the formation of S-adenosylmethionine from methionine and ATP. The reaction comprises two steps that are both catalyzed by the same enzyme: formation of S-adenosylmethionine (AdoMet) and triphosphate, and subsequent hydrolysis of the triphosphate. This is S-adenosylmethionine synthase (SAMS) from Gossypium hirsutum (Upland cotton).